The chain runs to 648 residues: Nucleoside triphosphatase I (648 aa).

The Helicase ATP-binding domain occupies 48–212 (FIGLKNLNSM…NNLIGLLRPN (165 aa)). 61–68 (WDTGMGKT) contacts ATP. The DEXH box signature appears at 150-153 (DEVH). The Helicase C-terminal domain maps to 378 to 541 (YIETCKIILN…KINVIFDLLK (164 aa)). Positions 467–533 (DIIILDMPWN…DIIKDKQGKI (67 aa)) are binding to the cap-specific mRNA (nucleoside-2'-O-)-methyltransferase.

This sequence belongs to the helicase family. NPH I subfamily. Monomer. Interacts (via C-terminus) with RAP94 (via N-terminus). Interacts with the cap-specific mRNA (nucleoside-2'-O-)-methyltransferase.

The protein localises to the virion. It carries out the reaction a ribonucleoside 5'-triphosphate + H2O = a ribonucleoside 5'-diphosphate + phosphate + H(+). DNA-dependent ATPase required for providing the needed energy to achieve the termination of early transcripts. Acts in concert with the RAP94 subunit of the virion RNA polymerase and the capping enzyme/VTF to catalyze release of UUUUUNU-containing nascent RNA from the elongation complex. NPH-I must bind ssDNA in order to exhibit ATPase activity. This Amsacta (AmEPV) protein is Nucleoside triphosphatase I (NPH1).